The chain runs to 429 residues: Glutamate-1-semialdehyde 2,1-aminomutase (429 aa).

At lysine 270 the chain carries N6-(pyridoxal phosphate)lysine.

The protein belongs to the class-III pyridoxal-phosphate-dependent aminotransferase family. HemL subfamily. As to quaternary structure, homodimer. Pyridoxal 5'-phosphate serves as cofactor.

Its subcellular location is the cytoplasm. It carries out the reaction (S)-4-amino-5-oxopentanoate = 5-aminolevulinate. Its pathway is porphyrin-containing compound metabolism; protoporphyrin-IX biosynthesis; 5-aminolevulinate from L-glutamyl-tRNA(Glu): step 2/2. This chain is Glutamate-1-semialdehyde 2,1-aminomutase, found in Cupriavidus pinatubonensis (strain JMP 134 / LMG 1197) (Cupriavidus necator (strain JMP 134)).